The following is a 724-amino-acid chain: MAQGCPITGLEVALTDLQSSQNNVRHHTEEISVDRLVVRRGQAFSITLYFKNRGFQPGMDSIMFVAETGPLPDLAKGTRAVFSFTGSGGPSPWIASLEANRANSLEVSLCAPPIAAVGRYLLKIRIDSYQGFVTAYQLGEFILLFNPWCPADSVYLESEPQRQEYVVNDYGFIYQGSKSWIRPCPWNYGQFEENIIDICLELLEKSLNFQVDPSTDCALRGSPVYTSRVVCAMINSNDDNGVLNGNWSENYVDGINPAEWTGSVAILKQWHATGCQPVRYGQCWVFAAVMCTVMRCLGIPTRVITNFDSGHDTDGNLIIDEYYDNTGRILENMKKDTVWNFHVWNECWMARKDLPPGYGGWQVLDATPQETSNGLYCCGPASVKAIKEGEIDLNYDTRFAFSMVNADCMSWLVYGGKEQKLHQDTATVGNFISTKSIQSDERDDITESYKYEEGSLQEREVFLKALQKLQATRSQGPHQANSNPFSSVPPRHNSARSPDSPSLQPSDVLQVSLKFELLDSPKMGQDINFVLLAVNMSPQFKDLKLNLSAQSLLHDGSPLVPFWQDTAFITLFPEEEKSYPCKILYSQYSQYLSTDKLIRISALGEEKNSPEKILVNKIITLTFPGIMINVLGAAFVNQPLTVQVVFSNPLSEPVEDCVLTLEGSGLFRKQQRVLIGVLKPHHKASITLKTVPFKSGQRQIQANLRSNRFKDIKGYKNVYVDIGL.

N-acetylalanine is present on A2. Active-site residues include C283, H342, and D365. Ca(2+)-binding residues include N405, D407, E453, and E458. Composition is skewed to polar residues over residues 473–486 (RSQGPHQANSNPFS) and 495–505 (ARSPDSPSLQP). Positions 473–505 (RSQGPHQANSNPFSSVPPRHNSARSPDSPSLQP) are disordered.

The protein belongs to the transglutaminase superfamily. Transglutaminase family. The cofactor is Ca(2+).

It localises to the cytoplasm. The catalysed reaction is L-glutaminyl-[protein] + L-lysyl-[protein] = [protein]-L-lysyl-N(6)-5-L-glutamyl-[protein] + NH4(+). In terms of biological role, catalyzes the cross-linking of proteins and the conjugation of polyamines to proteins. Contributes to the formation of the cornified cell envelope of keratinocytes. The protein is Protein-glutamine gamma-glutamyltransferase 5 (Tgm5) of Mus musculus (Mouse).